The chain runs to 398 residues: Acetyl-CoA acetyltransferase (398 aa).

Ser-2 carries the post-translational modification N-acetylserine. Cys-91 acts as the Acyl-thioester intermediate in catalysis. CoA is bound by residues Tyr-186 and Lys-231. Tyr-186 provides a ligand contact to K(+). 3 residues coordinate K(+): Ala-248, Ala-249, and Ala-251. Ser-252 serves as a coordination point for CoA. Val-350 provides a ligand contact to K(+). Residues His-354 and Cys-384 each act as proton acceptor in the active site.

Belongs to the thiolase-like superfamily. Thiolase family. In terms of assembly, homotetramer.

Its subcellular location is the cytoplasm. The enzyme catalyses 2 acetyl-CoA = acetoacetyl-CoA + CoA. It functions in the pathway metabolic intermediate biosynthesis; (R)-mevalonate biosynthesis; (R)-mevalonate from acetyl-CoA: step 1/3. Functionally, acetyl-CoA acetyltransferase; part of the first module of ergosterol biosynthesis pathway that includes the early steps of the pathway, conserved across all eukaryotes, and which results in the formation of mevalonate from acetyl-coenzyme A (acetyl-CoA). In this module, the acetyl-CoA acetyltransferase ERG10 catalyzes the formation of acetoacetyl-CoA. The hydroxymethylglutaryl-CoA synthase ERG13 then condenses acetyl-CoA with acetoacetyl-CoA to form HMG-CoA. The rate-limiting step of the early module is the reduction to mevalonate by the 3-hydroxy-3-methylglutaryl-coenzyme A (HMG-CoA) reductases HMG1 and HMG2 which are derived from a single ancestral HMGR gene by gene duplication. This Saccharomyces pastorianus (strain ATCC 76670 / Carlsberg bottom yeast no.2 / CBS 1503 / CLIB 180 / NBRC 10610 / NRRL Y-1525) (Saaz-type lager yeast) protein is Acetyl-CoA acetyltransferase.